Here is a 201-residue protein sequence, read N- to C-terminus: Recombination protein RecR (201 aa).

The C4-type zinc finger occupies Cys-57–Cys-72. The Toprim domain maps to Gly-81–Pro-176.

Belongs to the RecR family.

Its function is as follows. May play a role in DNA repair. It seems to be involved in an RecBC-independent recombinational process of DNA repair. It may act with RecF and RecO. The protein is Recombination protein RecR of Escherichia coli O17:K52:H18 (strain UMN026 / ExPEC).